Consider the following 198-residue polypeptide: Putative pseudouridine methyltransferase (198 aa).

S-adenosyl-L-methionine contacts are provided by Met132 and Cys186.

The protein belongs to the methyltransferase superfamily. TrmY family.

It is found in the cytoplasm. The polypeptide is Putative pseudouridine methyltransferase (Shewanella baltica (strain OS223)).